Consider the following 182-residue polypeptide: Receptor activity-modifying protein 2 (182 aa).

The first 45 residues, 1–45, serve as a signal peptide directing secretion; that stretch reads MAPLRVERAPGGSQLAVTSAQRPAALRLPPLLLLLLLLLLGAVST. Residues 46 to 150 are Extracellular-facing; that stretch reads SPESLNQSHP…VQPTFSDPPE (105 aa). N-linked (GlcNAc...) asparagine glycosylation is found at Asn-51, Asn-92, and Asn-137. Intrachain disulfides connect Cys-76–Cys-106 and Cys-91–Cys-138. A helical membrane pass occupies residues 151-172; that stretch reads DVLLAMIIAPICLIPFLVTLVV. Over 173–182 the chain is Cytoplasmic; it reads WRSKDGDAQA.

It belongs to the RAMP family. As to quaternary structure, heterodimer of CALCRL and RAMP2; the interaction forms the receptor complex for adrenomedullin/ADM. Heterodimer of CALCR and RAMP2; interaction forms the AMYR2 receptor complex for calcitonin/CALC and amylin/IAPP.

Its subcellular location is the cell membrane. Its function is as follows. Accessory protein that interacts with and modulates the function of G-protein coupled receptors including calcitonin gene-related peptide type 1 receptor (CALCRL) and calcitonin receptor (CALCR). Required for the transport of CALCRL to the plasma membrane. Together with CALCRL, form a receptor complex for adrenomedullin/ADM. Together with CALCR, act as a receptor complex for calcitonin/CT/CALC. Together with CALCR, also act as a receptor complex for amylin/IAPP. The sequence is that of Receptor activity-modifying protein 2 from Rattus norvegicus (Rat).